Here is a 78-residue protein sequence, read N- to C-terminus: Small ribosomal subunit protein bS18 (78 aa).

This sequence belongs to the bacterial ribosomal protein bS18 family. As to quaternary structure, part of the 30S ribosomal subunit. Forms a tight heterodimer with protein bS6.

In terms of biological role, binds as a heterodimer with protein bS6 to the central domain of the 16S rRNA, where it helps stabilize the platform of the 30S subunit. This Limosilactobacillus fermentum (strain NBRC 3956 / LMG 18251) (Lactobacillus fermentum) protein is Small ribosomal subunit protein bS18.